The following is a 113-amino-acid chain: Nucleoid-associated protein CLH_3225 (113 aa).

A compositionally biased stretch (gly residues) spans 1 to 14; it reads MAKGGFPGGFGGGN. A disordered region spans residues 1 to 31; it reads MAKGGFPGGFGGGNMNNLMKQAQKLQKQMED.

The protein belongs to the YbaB/EbfC family. In terms of assembly, homodimer.

It localises to the cytoplasm. The protein resides in the nucleoid. Binds to DNA and alters its conformation. May be involved in regulation of gene expression, nucleoid organization and DNA protection. The chain is Nucleoid-associated protein CLH_3225 from Clostridium botulinum (strain Alaska E43 / Type E3).